The primary structure comprises 318 residues: Methionyl-tRNA formyltransferase (318 aa).

112 to 115 (SILP) serves as a coordination point for (6S)-5,6,7,8-tetrahydrofolate.

Belongs to the Fmt family.

The enzyme catalyses L-methionyl-tRNA(fMet) + (6R)-10-formyltetrahydrofolate = N-formyl-L-methionyl-tRNA(fMet) + (6S)-5,6,7,8-tetrahydrofolate + H(+). Attaches a formyl group to the free amino group of methionyl-tRNA(fMet). The formyl group appears to play a dual role in the initiator identity of N-formylmethionyl-tRNA by promoting its recognition by IF2 and preventing the misappropriation of this tRNA by the elongation apparatus. The sequence is that of Methionyl-tRNA formyltransferase from Shewanella putrefaciens (strain CN-32 / ATCC BAA-453).